A 216-amino-acid chain; its full sequence is Outer-membrane lipoprotein LolB (216 aa).

A signal peptide spans 1–21; sequence MLIFKICFYRLLPLSVLLLAA. Residue C22 is the site of N-palmitoyl cysteine attachment. Residue C22 is the site of S-diacylglycerol cysteine attachment.

Belongs to the LolB family. In terms of assembly, monomer.

The protein localises to the cell outer membrane. In terms of biological role, plays a critical role in the incorporation of lipoproteins in the outer membrane after they are released by the LolA protein. The sequence is that of Outer-membrane lipoprotein LolB from Hamiltonella defensa subsp. Acyrthosiphon pisum (strain 5AT).